The sequence spans 57 residues: Enolase (57 aa).

The Proton donor role is filled by Glu-25.

It belongs to the enolase family. Mg(2+) serves as cofactor.

The protein localises to the cytoplasm. It is found in the secreted. Its subcellular location is the cell surface. The enzyme catalyses (2R)-2-phosphoglycerate = phosphoenolpyruvate + H2O. It functions in the pathway carbohydrate degradation; glycolysis; pyruvate from D-glyceraldehyde 3-phosphate: step 4/5. In terms of biological role, catalyzes the reversible conversion of 2-phosphoglycerate (2-PG) into phosphoenolpyruvate (PEP). It is essential for the degradation of carbohydrates via glycolysis. The chain is Enolase from Clostridioides difficile (Peptoclostridium difficile).